Consider the following 1312-residue polypeptide: Angiotensin-converting enzyme (1312 aa).

Positions 1-34 are cleaved as a signal peptide; the sequence is MGAASGQRGRWPLSPPLLMLSLLVLLLQPSPAPA. At 35–1264 the chain is on the extracellular side; sequence LDPGLQPGNF…LEPQQARVGQ (1230 aa). Peptidase M2 domains lie at 45–629 and 648–1227; these read SPDE…LGWP and ETDE…LGWP. N-linked (GlcNAc...) asparagine glycosylation is found at asparagine 59, asparagine 79, asparagine 116, asparagine 151, and asparagine 165. The cysteines at positions 162 and 170 are disulfide-linked. Tyrosine 236 contributes to the chloride binding site. An N-linked (GlcNAc...) asparagine glycan is attached at asparagine 323. Cysteines 364 and 382 form a disulfide. Histidine 395 provides a ligand contact to Zn(2+). The Proton acceptor 1 role is filled by glutamate 396. Histidine 399 and glutamate 423 together coordinate Zn(2+). N-linked (GlcNAc...) asparagine glycosylation is present at asparagine 514. Histidine 525 serves as the catalytic Proton donor 1. Arginine 534 contributes to the chloride binding site. Cysteines 550 and 562 form a disulfide. N-linked (GlcNAc...) asparagine glycosylation occurs at asparagine 682. 2 N-linked (GlcNAc...) (complex) asparagine glycosylation sites follow: asparagine 700 and asparagine 719. A disulfide bond links cysteine 762 and cysteine 768. A glycan (N-linked (GlcNAc...) asparagine) is linked at asparagine 765. Chloride contacts are provided by arginine 796 and tyrosine 834. N-linked (GlcNAc...) asparagine glycosylation occurs at asparagine 947. Cysteines 962 and 980 form a disulfide. Histidine 993 is a binding site for Zn(2+). Glutamate 994 functions as the Proton acceptor 2 in the catalytic mechanism. Zn(2+) contacts are provided by histidine 997 and glutamate 1021. Residues tryptophan 1095 and arginine 1099 each contribute to the chloride site. Histidine 1123 functions as the Proton donor 2 in the catalytic mechanism. Arginine 1132 serves as a coordination point for chloride. Cysteine 1148 and cysteine 1160 are oxidised to a cystine. Asparagine 1196 carries N-linked (GlcNAc...) asparagine glycosylation. Positions 1220–1261 are juxtamembrane stalk; the sequence is HGETLGWPEYNWAPNTARAEGSTAESNRVNFLGLYLEPQQAR. A helical membrane pass occupies residues 1265–1281; that stretch reads WVLLFLGVALLVATVGL. The Cytoplasmic portion of the chain corresponds to 1282–1312; it reads AHRLYNIRNHHSLRRPHRGPQFGSEVELRHS. Serine 1305 is subject to Phosphoserine.

The protein belongs to the peptidase M2 family. In terms of assembly, monomer and homodimer; homodimerizes following binding to an inhibitor. Interacts with calmodulin (CALM1, CALM2 or CALM3); interaction takes place in the cytoplasmic region and regulates phosphorylation and proteolytic cleavage. Zn(2+) is required as a cofactor. It depends on chloride as a cofactor. Produced following proteolytic cleavage by secretase enzymes that cleave the transmembrane form in the juxtamembrane stalk region upstream of the transmembrane region. Cleavage can take place at different sites of the juxtamembrane stalk region. Post-translationally, phosphorylated by CK2 on Ser-1305; which allows membrane retention. Phosphorylated on tyrosine residues on its extracellular part, promoting cleavage by secretase enzymes and formation of the soluble form (Angiotensin-converting enzyme, soluble form). As to expression, highly expressed in kidney and lung; not expressed in the liver. In the brain, expressed in the cerebral cortex, hippocampus, cerebellum and basal ganglia/brainstem. Highly expressed in dopamine receptor DRD1-expressing neurons in the dorsal striatum and the nucleus accumbens of the brain. In terms of tissue distribution, specifically expressed in spermatocytes, adult testis.

The protein localises to the cell membrane. It is found in the cytoplasm. Its subcellular location is the secreted. It catalyses the reaction Release of a C-terminal dipeptide, oligopeptide-|-Xaa-Yaa, when Xaa is not Pro, and Yaa is neither Asp nor Glu. Thus, conversion of angiotensin I to angiotensin II, with increase in vasoconstrictor activity, but no action on angiotensin II.. It carries out the reaction angiotensin I + H2O = L-histidyl-L-leucine + angiotensin II. The enzyme catalyses bradykinin + H2O = L-Phe-L-Arg + bradykinin(1-7). The catalysed reaction is substance P + H2O = substance P(1-9) + L-Leu-L-Met-NH2. It catalyses the reaction substance P + H2O = substance P(1-8) + Gly-L-Leu-L-Met-NH2. It carries out the reaction substance P + H2O = L-Phe-L-Phe-Gly-L-Leu-L-Met-NH2 + substance P(1-6). The enzyme catalyses neurotensin + H2O = neurotensin(1-11) + L-isoleucyl-L-leucine. The catalysed reaction is goralatide + H2O = N-acetyl-L-seryl-L-aspartate + L-lysyl-L-proline. It catalyses the reaction Met-enkephalin + H2O = L-phenylalanyl-L-methionine + L-tyrosylglycylglycine. It carries out the reaction Leu-enkephalin + H2O = L-tyrosylglycylglycine + L-phenylalanyl-L-leucine. The enzyme catalyses Met-enkephalin-Arg-Phe + H2O = L-arginyl-L-phenylalanine + Met-enkephalin. With respect to regulation, the dipeptidyl carboxypeptidase activity is specifically inhibited by lisinopril, captopril and enalaprilat. The N-terminal catalytic domain, but not the C-terminal catalytic domain, is specifically inhibited by the phosphinic peptide RXP 407. The putative GPIase activity is nearly insensitive to captopril. In terms of biological role, dipeptidyl carboxypeptidase that removes dipeptides from the C-terminus of a variety of circulating hormones, such as angiotensin I, bradykinin or enkephalins, thereby playing a key role in the regulation of blood pressure, electrolyte homeostasis or synaptic plasticity. Composed of two similar catalytic domains, each possessing a functional active site, with different selectivity for substrates. Plays a major role in the angiotensin-renin system that regulates blood pressure and sodium retention by the kidney by converting angiotensin I to angiotensin II, resulting in an increase of the vasoconstrictor activity of angiotensin. Also able to inactivate bradykinin, a potent vasodilator, and therefore enhance the blood pressure response. Acts as a regulator of synaptic transmission by mediating cleavage of neuropeptide hormones, such as substance P, neurotensin or enkephalins. Catalyzes degradation of different enkephalin neuropeptides (Met-enkephalin, Leu-enkephalin, Met-enkephalin-Arg-Phe and possibly Met-enkephalin-Arg-Gly-Leu). Acts as a regulator of synaptic plasticity in the nucleus accumbens of the brain by mediating cleavage of Met-enkephalin-Arg-Phe, a strong ligand of Mu-type opioid receptor OPRM1, into Met-enkephalin. Met-enkephalin-Arg-Phe cleavage by ACE decreases activation of OPRM1, leading to long-term synaptic potentiation of glutamate release. Also acts as a regulator of hematopoietic stem cell differentiation by mediating degradation of hemoregulatory peptide N-acetyl-SDKP (AcSDKP). Acts as a regulator of cannabinoid signaling pathway by mediating degradation of hemopressin, an antagonist peptide of the cannabinoid receptor CNR1. Involved in amyloid-beta metabolism by catalyzing degradation of Amyloid-beta protein 40 and Amyloid-beta protein 42 peptides, thereby preventing plaque formation. Catalyzes cleavage of cholecystokinin (maturation of Cholecystokinin-8 and Cholecystokinin-5) and Gonadoliberin-1 (both maturation and degradation) hormones. Degradation of hemoregulatory peptide N-acetyl-SDKP (AcSDKP) and amyloid-beta proteins is mediated by the N-terminal catalytic domain, while angiotensin I and cholecystokinin cleavage is mediated by the C-terminal catalytic region. Soluble form that is released in blood plasma and other body fluids following proteolytic cleavage in the juxtamembrane stalk region. Its function is as follows. Isoform produced by alternative promoter usage that is specifically expressed in spermatocytes and adult testis, and which is required for male fertility. In contrast to somatic isoforms, only contains one catalytic domain. Acts as a dipeptidyl carboxypeptidase that removes dipeptides from the C-terminus of substrates. The identity of substrates that are needed for male fertility is unknown. Isoform Testis-specific and isoform Somatic have distinct activities and cannot completely compensate for the loss of the other when expressed in somatic tissues or testis. May also have a glycosidase activity which releases GPI-anchored proteins from the membrane by cleaving the mannose linkage in the GPI moiety. The GPIase activity was reported to be essential for the egg-binding ability of the sperm. This activity is however unclear and has been challenged by other groups, suggesting that it may be indirect. This Mus musculus (Mouse) protein is Angiotensin-converting enzyme.